The following is a 72-amino-acid chain: Translation initiation factor IF-1 (72 aa).

One can recognise an S1-like domain in the interval 1–72 (MAKDDVIEVE…NRGRITYRFK (72 aa)). Y60 bears the Phosphotyrosine mark.

Belongs to the IF-1 family. Component of the 30S ribosomal translation pre-initiation complex which assembles on the 30S ribosome in the order IF-2 and IF-3, IF-1 and N-formylmethionyl-tRNA(fMet); mRNA recruitment can occur at any time during PIC assembly.

Its subcellular location is the cytoplasm. One of the essential components for the initiation of protein synthesis. Stabilizes the binding of IF-2 and IF-3 on the 30S subunit to which N-formylmethionyl-tRNA(fMet) subsequently binds. Helps modulate mRNA selection, yielding the 30S pre-initiation complex (PIC). Upon addition of the 50S ribosomal subunit IF-1, IF-2 and IF-3 are released leaving the mature 70S translation initiation complex. In Bacillus thuringiensis (strain Al Hakam), this protein is Translation initiation factor IF-1.